The primary structure comprises 210 residues: Na(+)-translocating NADH-quinone reductase subunit D (210 aa).

The next 5 membrane-spanning stretches (helical) occupy residues 42–62 (FVMT…VSLI), 72–92 (IIVQ…ILKA), 103–123 (VFVG…AFAM), 131–151 (FIDG…VGFF), and 178–198 (NGLM…IWAI).

The protein belongs to the NqrDE/RnfAE family. Composed of six subunits; NqrA, NqrB, NqrC, NqrD, NqrE and NqrF.

It localises to the cell inner membrane. It carries out the reaction a ubiquinone + n Na(+)(in) + NADH + H(+) = a ubiquinol + n Na(+)(out) + NAD(+). NQR complex catalyzes the reduction of ubiquinone-1 to ubiquinol by two successive reactions, coupled with the transport of Na(+) ions from the cytoplasm to the periplasm. NqrA to NqrE are probably involved in the second step, the conversion of ubisemiquinone to ubiquinol. The chain is Na(+)-translocating NADH-quinone reductase subunit D from Vibrio cholerae serotype O1 (strain M66-2).